We begin with the raw amino-acid sequence, 763 residues long: Thyrotropin receptor (763 aa).

Residues 1–21 (MRPTPLLRLALFLVLPSSLGG) form the signal peptide. Over 22 to 412 (ERCPSPPCEC…EFNPCEDIMG (391 aa)) the chain is Extracellular. Cys-31 and Cys-41 are joined by a disulfide. One copy of the LRR 1 repeat lies at 51 to 74 (PPSTQTLKFIETHLKTIPSRAFSN). 2 N-linked (GlcNAc...) asparagine glycosylation sites follow: Asn-77 and Asn-99. LRR repeat units lie at residues 125–150 (LPLL…IYST), 151–174 (DVFF…AFQG), 176–199 (CNET…AFNG), 201–223 (KLDA…AFAG), and 225–248 (YSGP…GLEH). Residues Asn-177 and Asn-198 are each glycosylated (N-linked (GlcNAc...) asparagine). Asn-302 carries an N-linked (GlcNAc...) asparagine glycan. Sulfotyrosine is present on Tyr-384. Residues 413 to 440 (YKFLRIVVWFVSLLALLGNVFVLVILLT) traverse the membrane as a helical segment. At 441-449 (SHYKLTVPR) the chain is on the cytoplasmic side. The chain crosses the membrane as a helical span at residues 450–472 (FLMCNLAFADFCMGLYLLLIASV). The Extracellular segment spans residues 473 to 493 (DLYTQSEYYNHAIDWQTGPGC). Cysteines 493 and 568 form a disulfide. A helical transmembrane segment spans residues 494 to 516 (NTAGFFTVFASELSVYTLTVITL). Residues 517–536 (ERWHAITFAMRLDRKIRLWH) are Cytoplasmic-facing. A helical membrane pass occupies residues 537 to 559 (AYVIMLGGWVCCFLLALLPLVGI). Over 560–579 (SSYAKVSICLPMDTETPLAL) the chain is Extracellular. The chain crosses the membrane as a helical span at residues 580 to 601 (AYIILVLLLNIIAFIIVCACYV). Residues 602 to 624 (KIYITVRNPHYNPGDKDTRIAKR) lie on the Cytoplasmic side of the membrane. Residues 625 to 648 (MAVLIFTDFMCMAPISFYALSALM) traverse the membrane as a helical segment. The Extracellular portion of the chain corresponds to 649–659 (NKPLITVTNSK). Residues 660 to 681 (ILLVLFYPLNSCANPFLYAIFT) form a helical membrane-spanning segment. Residues 682 to 763 (KAFQRDVFML…TSKEYKRTVL (82 aa)) are Cytoplasmic-facing. The disordered stretch occupies residues 742–763 (ENSHLTPKQQDQTSKEYKRTVL). Polar residues predominate over residues 744–753 (SHLTPKQQDQ). The segment covering 754–763 (TSKEYKRTVL) has biased composition (basic and acidic residues). Residues 761–763 (TVL) carry the PDZ-binding motif.

Belongs to the G-protein coupled receptor 1 family. FSH/LSH/TSH subfamily. Interacts with heterodimer GPHA2:GPHB5; this interaction stimulates cAMP production. Interacts (via the PDZ-binding motif) with SCRIB; regulates TSHR trafficking and function. Post-translationally, glycosylated. In terms of processing, sulfated. Sulfation on Tyr-384 plays a role in thyrotropin receptor binding and activation.

It localises to the cell membrane. The protein resides in the basolateral cell membrane. In terms of biological role, receptor for the thyroid-stimulating hormone (TSH) or thyrotropin. Also acts as a receptor for the heterodimeric glycoprotein hormone (GPHA2:GPHB5) or thyrostimulin. The activity of this receptor is mediated by G proteins which activate adenylate cyclase. Plays a central role in controlling thyroid cell metabolism. This chain is Thyrotropin receptor (TSHR), found in Bos taurus (Bovine).